A 131-amino-acid chain; its full sequence is MKKTKMINSDMSRVIAQMGHFDKLSIGDAGMPVPMGIEKIDLAVDNGIPSFMQVLTNVLEELEVQRIYLAEEIKTENPKMLENIKALMPETPITFMPHSDMKQDLNNCHAFVRTGEMTPYSNIILESGVVF.

Catalysis depends on H20, which acts as the Proton donor. Substrate is bound by residues D28, H98, and 120–122 (YSN).

The protein belongs to the RbsD / FucU family. RbsD subfamily. Homodecamer.

It is found in the cytoplasm. The enzyme catalyses beta-D-ribopyranose = beta-D-ribofuranose. The protein operates within carbohydrate metabolism; D-ribose degradation; D-ribose 5-phosphate from beta-D-ribopyranose: step 1/2. Catalyzes the interconversion of beta-pyran and beta-furan forms of D-ribose. This Pediococcus pentosaceus (strain ATCC 25745 / CCUG 21536 / LMG 10740 / 183-1w) protein is D-ribose pyranase.